The following is a 440-amino-acid chain: Xaa-Pro dipeptidase (440 aa).

Residues Asp244, Asp255, His335, Glu380, and Glu419 each coordinate Mn(2+).

The protein belongs to the peptidase M24B family. Bacterial-type prolidase subfamily. Requires Mn(2+) as cofactor.

The enzyme catalyses Xaa-L-Pro dipeptide + H2O = an L-alpha-amino acid + L-proline. Functionally, splits dipeptides with a prolyl residue in the C-terminal position. The chain is Xaa-Pro dipeptidase from Shewanella baltica (strain OS195).